The following is a 704-amino-acid chain: SH3KBP1-binding protein 1 (704 aa).

N-acetylalanine is present on alanine 2. The region spanning 19–88 is the BTB domain; it reads EVIHLNVGGK…LRTKELDPRG (70 aa). Residues 145–165 form a disordered region; sequence LVGPQQAGGRPAPVRRSNTMP. At threonine 163 the chain carries Phosphothreonine. WD repeat units follow at residues 233-280, 283-322, 324-359, 428-466, and 548-586; these read RLDW…GGSE, VFHL…WQVQ, VQPI…LRMK, VHRS…GMIS, and LECE…DGLG. A compositionally biased stretch (low complexity) spans 611–644; that stretch reads ASSRGSLPSPSPRTSLTSLHSAFSNTSLSSRRGS. Residues 611-704 form a disordered region; it reads ASSRGSLPSP…PKTKLNETSF (94 aa). Residues 618-623 carry the PXXXPR motif; that stretch reads PSPSPR. 2 positions are modified to phosphoserine: serine 644 and serine 646. A PXXXPR motif is present at residues 678-683; it reads PTPAPR.

This sequence belongs to the KCTD3 family. In terms of assembly, monomer. Interacts with CUL3; interaction is direct and forms a 5:5 heterodecamer. Interacts (via PXXXPR motifs) with SH3KBP1 (via SH3 domains). Directly interacts with cathepsin B/CTSB.

The protein localises to the lysosome. Inhibits CBL-SH3KBP1 complex mediated down-regulation of EGFR signaling by sequestration of SH3KBP1. Binds to SH3KBP1 and prevents its interaction with CBL and inhibits translocation of SH3KBP1 to EGFR containing vesicles upon EGF stimulation. This is SH3KBP1-binding protein 1 (SHKBP1) from Bos taurus (Bovine).